We begin with the raw amino-acid sequence, 129 residues long: Glycine cleavage system H protein (129 aa).

A Lipoyl-binding domain is found at S24 to M106. K65 carries the N6-lipoyllysine modification.

Belongs to the GcvH family. The glycine cleavage system is composed of four proteins: P, T, L and H. (R)-lipoate is required as a cofactor.

The glycine cleavage system catalyzes the degradation of glycine. The H protein shuttles the methylamine group of glycine from the P protein to the T protein. The protein is Glycine cleavage system H protein of Shewanella frigidimarina (strain NCIMB 400).